Consider the following 224-residue polypeptide: MKKAVVLLSGGMDSAAVIALAQEQGFAVYALSVRYGQRHTSELDAAARVAAAQGVIAHKVVDVDLRSIGGSALTDDIEVPDAGGDGIPVTYVPARNTIMLSLALGWAEVIGANDLFCGVNAVDYSGYPDCRPEFVRAFEVLANLATKAGVEGAGLRVHAPLQFLSKADIVREGVRLGVDFGVTVSCYRADADGRACGHCDACRLRAAGFADAGIPDPTHYAILS.

An ATP-binding site is contributed by 8–18 (LSGGMDSAAVI). Residues C186, C196, C199, and C202 each coordinate Zn(2+).

This sequence belongs to the QueC family. Zn(2+) is required as a cofactor.

The enzyme catalyses 7-carboxy-7-deazaguanine + NH4(+) + ATP = 7-cyano-7-deazaguanine + ADP + phosphate + H2O + H(+). The protein operates within purine metabolism; 7-cyano-7-deazaguanine biosynthesis. Functionally, catalyzes the ATP-dependent conversion of 7-carboxy-7-deazaguanine (CDG) to 7-cyano-7-deazaguanine (preQ(0)). This is 7-cyano-7-deazaguanine synthase from Xanthomonas axonopodis pv. citri (strain 306).